A 162-amino-acid polypeptide reads, in one-letter code: Peptide deformylase-like (162 aa).

This sequence belongs to the polypeptide deformylase family.

This is Peptide deformylase-like from Staphylococcus aureus (strain COL).